Consider the following 61-residue polypeptide: MLPNLRRIFASFRTEEEERSYSRKAFFHLIGYITCSVLFSWLVRKKVISSPVVSSPIHALS.

Topologically, residues 1 to 20 are mitochondrial intermembrane; that stretch reads MLPNLRRIFASFRTEEEERS. The helical transmembrane segment at 21 to 43 threads the bilayer; sequence YSRKAFFHLIGYITCSVLFSWLV. The Cytoplasmic portion of the chain corresponds to 44-61; it reads RKKVISSPVVSSPIHALS.

It belongs to the EMR1 family. Interacts with the ER-mitochondria encounter structure (ERMES) complex. Interacts with mdm12. Interacts with mdm34.

It is found in the mitochondrion outer membrane. Mediates the formation of endoplasmic reticulum (ER)-mitochondria encounter structure (ERMES) foci, thereby contributing to the formation of ER-mitochondrial contact sites. The polypeptide is ERMES regulator 1 (Schizosaccharomyces pombe (strain 972 / ATCC 24843) (Fission yeast)).